A 457-amino-acid chain; its full sequence is ATP synthase subunit beta (457 aa).

147–154 (GGAGVGKT) contacts ATP.

It belongs to the ATPase alpha/beta chains family. In terms of assembly, F-type ATPases have 2 components, CF(1) - the catalytic core - and CF(0) - the membrane proton channel. CF(1) has five subunits: alpha(3), beta(3), gamma(1), delta(1), epsilon(1). CF(0) has three main subunits: a(1), b(2) and c(9-12). The alpha and beta chains form an alternating ring which encloses part of the gamma chain. CF(1) is attached to CF(0) by a central stalk formed by the gamma and epsilon chains, while a peripheral stalk is formed by the delta and b chains.

The protein localises to the cell inner membrane. The catalysed reaction is ATP + H2O + 4 H(+)(in) = ADP + phosphate + 5 H(+)(out). Functionally, produces ATP from ADP in the presence of a proton gradient across the membrane. The catalytic sites are hosted primarily by the beta subunits. This is ATP synthase subunit beta from Actinobacillus pleuropneumoniae serotype 3 (strain JL03).